We begin with the raw amino-acid sequence, 939 residues long: Progesterone receptor (939 aa).

Basic and acidic residues predominate over residues 1–11 (MTERTGKDARA). Residues 1 to 174 (MTERTGKDAR…RSSQGAACPL (174 aa)) are AF3; mediates transcriptional activation (in isoform B). Residues 1 to 302 (MTERTGKDAR…AEQDAPAPGC (302 aa)) form a disordered region. A modulating, Ala/Pro-rich region spans residues 1–572 (MTERTGKDAR…YSFESLPQKI (572 aa)). Lys7 is covalently cross-linked (Glycyl lysine isopeptide (Lys-Gly) (interchain with G-Cter in SUMO)). A compositionally biased stretch (low complexity) spans 15–26 (AGGAPSPAPAAE). Ser20 carries the phosphoserine modification. Over residues 27 to 36 (PESRRRDGGR) the composition is skewed to basic and acidic residues. Residues 49-67 (AAAAAAAAAAASAAPSAPS) show a composition bias toward low complexity. A Phosphoserine modification is found at Ser141. The tract at residues 175–314 (MSRPEGKAGD…LATTMMDFIH (140 aa)) is mediates transcriptional transrepression (in isoform A). The short motif at 193 to 197 (KGPPR) is the Nuclear localization signal element. Phosphoserine is present on Ser200. 2 stretches are compositionally biased toward low complexity: residues 211-230 (GAHA…AALG) and 257-278 (PAAA…TAPV). Ser303 carries the phosphoserine; by MAPK1 modification. The residue at position 349 (Ser349) is a Phosphoserine; by MAPK. Lys392 participates in a covalent cross-link: Glycyl lysine isopeptide (Lys-Gly) (interchain with G-Cter in SUMO); alternate. Lys392 participates in a covalent cross-link: Glycyl lysine isopeptide (Lys-Gly) (interchain with G-Cter in ubiquitin); alternate. Phosphoserine; by CDK2 is present on Ser404. Positions 463-552 (PALECVLYKA…VYQPYLNYLR (90 aa)) are AF1; mediates transcriptional activation. Lys537 is covalently cross-linked (Glycyl lysine isopeptide (Lys-Gly) (interchain with G-Cter in SUMO)). 2 consecutive NR C4-type zinc fingers follow at residues 573-593 (CLIC…CGSC) and 609-633 (CAGR…LRKC). Positions 573–645 (CLICGDEASG…AGMVLGGRKF (73 aa)) form a DNA-binding region, nuclear receptor. Phosphoserine is present on Ser682. The NR LBD domain occupies 685–919 (QDIQLIPPLI…EFPEMMSEVI (235 aa)). An AF2; mediates transcriptional activation region spans residues 693-939 (LINLLMSIEP…MVKPLLFHKK (247 aa)).

This sequence belongs to the nuclear hormone receptor family. NR3 subfamily. Interacts with SMARD1 and UNC45A. Interacts with CUEDC2; the interaction promotes ubiquitination, decreases sumoylation, and represses transcriptional activity. Interacts with PIAS3; the interaction promotes sumoylation of PR in a hormone-dependent manner, inhibits DNA-binding, and alters nuclear export. Interacts with SP1; the interaction requires ligand-induced phosphorylation on Ser-349 by ERK1/2-MAPK. Interacts with PRMT2. Isoform A interacts with NCOR2. Isoform B (but not isoform A) interacts with NCOA2 and NCOA1. Isoform B (but not isoform A) interacts with KLF9. Interacts with GTF2B. Post-translationally, phosphorylated on multiple serine sites. Several of these sites are hormone-dependent. Phosphorylation on Ser-303 occurs preferentially on isoform B, is highly hormone-dependent and modulates ubiquitination and sumoylation on Lys-392. Phosphorylation on Ser-303 and Ser-349 also requires induction by hormone. Basal phosphorylation on Ser-200 and Ser-404 is increased in response to progesterone and can be phosphorylated in vitro by the CDK2-A1 complex. Increased levels of phosphorylation on Ser-404 also in the presence of EGF, heregulin, IGF, PMA and FBS. Phosphorylation at this site by CDK2 is ligand-independent, and increases nuclear translocation and transcriptional activity. Phosphorylation at Ser-303, but not at Ser-200, is impaired during the G(2)/M phase of the cell cycle. Phosphorylation on Ser-349 by ERK1/2 MAPK is required for interaction with SP1. In terms of processing, sumoylation is hormone-dependent and represses transcriptional activity. Sumoylation on all three sites is enhanced by PIAS3. Desumoylated by SENP1. Sumoylation on Lys-392, the main site of sumoylation, is repressed by ubiquitination on the same site, and modulated by phosphorylation at Ser-303. Ubiquitination is hormone-dependent and represses sumoylation on the same site. Promoted by MAPK-mediated phosphorylation on Ser-303. Post-translationally, palmitoylated by ZDHHC7 and ZDHHC21. Palmitoylation is required for plasma membrane targeting and for rapid intracellular signaling via ERK and AKT kinases and cAMP generation. In terms of tissue distribution, expressed in mammary gland and uterus.

Its subcellular location is the nucleus. It is found in the cytoplasm. The steroid hormones and their receptors are involved in the regulation of eukaryotic gene expression and affect cellular proliferation and differentiation in target tissues. Depending on the isoform, progesterone receptor functions as a transcriptional activator or repressor. In terms of biological role, ligand-dependent transdominant repressor of steroid hormone receptor transcriptional activity including repression of its isoform B, MR and ER. Transrepressional activity may involve recruitment of corepressor NCOR2. Its function is as follows. Transcriptional activator of several progesteron-dependent promoters in a variety of cell types. Involved in activation of SRC-dependent MAPK signaling on hormone stimulation. The chain is Progesterone receptor (PGR) from Canis lupus familiaris (Dog).